The primary structure comprises 203 residues: Outer-membrane lipoprotein LolB (203 aa).

The N-terminal stretch at 1 to 17 (MNRLFRLLPLASLVLTA) is a signal peptide. A lipid anchor (N-palmitoyl cysteine) is attached at cysteine 18. Cysteine 18 carries S-diacylglycerol cysteine lipidation.

It belongs to the LolB family. In terms of assembly, monomer.

The protein localises to the cell outer membrane. Functionally, plays a critical role in the incorporation of lipoproteins in the outer membrane after they are released by the LolA protein. In Klebsiella pneumoniae subsp. pneumoniae (strain ATCC 700721 / MGH 78578), this protein is Outer-membrane lipoprotein LolB.